Consider the following 961-residue polypeptide: Phosphofurin acidic cluster sorting protein 1 (961 aa).

The span at 1-19 shows a compositional bias: gly residues; sequence MAERGGAGGGPGGSGGGSS. 2 disordered regions span residues 1 to 70 and 76 to 95; these read MAER…SSST and VAVASGSAPPGGPGPGRTPA. A2 carries the post-translational modification N-acetylalanine. Residues 20–34 show a composition bias toward low complexity; that stretch reads QRGSGVAQSPQQQPQ. A Phosphoserine modification is found at S28. Over residues 35 to 46 the composition is skewed to pro residues; sequence QQPPQPQQPTPP. A Phosphothreonine modification is found at T44. A compositionally biased stretch (low complexity) spans 51–70; the sequence is ATSSSSSTSAAAASSSSSST. A Phosphotyrosine modification is found at Y249. The segment covering 260-271 has biased composition (basic and acidic residues); sequence GIKSKLSDRSPD. Disordered regions lie at residues 260–297 and 375–426; these read GIKSKLSDRSPDIDNYSEEEEESFSSEQEGSDDPLHGQ and NPSD…GKDT. The span at 274–291 shows a compositional bias: acidic residues; it reads NYSEEEEESFSSEQEGSD. A coiled-coil region spans residues 351–375; the sequence is HVSREQIREVEEDLDELYDSLEMYN. Residues S377 and S379 each carry the phosphoserine modification. The span at 404–426 shows a compositional bias: polar residues; sequence MSQSSSQTEIGSLNSKGSLGKDT. S428 and S493 each carry phosphoserine. Disordered stretches follow at residues 475–540 and 758–802; these read EKVK…HSTQ and SPST…SMSS. T502 is modified (phosphothreonine). Phosphoserine is present on residues S517, S526, S527, S529, and S532. Positions 768-802 are enriched in low complexity; sequence SPVVSLTVPSTSPPSSSGLSRDATATPPSSPSMSS.

The protein belongs to the PACS family. As to quaternary structure, associates with AP-1 and AP-3 but not with AP-2 complexes. Interacts with FURIN. Forms a ternary complex with FURIN and AP-1. Interacts with PKD2 (via acidic region). Interacts with SORL1. Interacts with WDR37.

It is found in the golgi apparatus. It localises to the trans-Golgi network. Functionally, coat protein that is involved in the localization of trans-Golgi network (TGN) membrane proteins that contain acidic cluster sorting motifs. Controls the endosome-to-Golgi trafficking of furin and mannose-6-phosphate receptor by connecting the acidic-cluster-containing cytoplasmic domain of these molecules with the adapter-protein complex-1 (AP-1) of endosomal clathrin-coated membrane pits. Required for normal ER Ca2+ handling in lymphocytes. Together with WDR37, it plays an essential role in lymphocyte development, quiescence and survival. Required for stabilizing peripheral lymphocyte populations. In Mus musculus (Mouse), this protein is Phosphofurin acidic cluster sorting protein 1 (Pacs1).